The chain runs to 397 residues: Elongation factor Tu (397 aa).

The 197-residue stretch at 10–206 (KPHVNIGTIG…AVDSYIPTPE (197 aa)) folds into the tr-type G domain. The segment at 19–26 (GHVDHGKT) is G1. 19-26 (GHVDHGKT) serves as a coordination point for GTP. T26 is a binding site for Mg(2+). The tract at residues 60 to 64 (GITIN) is G2. Residues 81–84 (DCPG) form a G3 region. GTP contacts are provided by residues 81–85 (DCPGH) and 136–139 (NKAD). The G4 stretch occupies residues 136 to 139 (NKAD). Residues 174–176 (SAL) form a G5 region.

It belongs to the TRAFAC class translation factor GTPase superfamily. Classic translation factor GTPase family. EF-Tu/EF-1A subfamily. In terms of assembly, monomer.

The protein resides in the cytoplasm. It catalyses the reaction GTP + H2O = GDP + phosphate + H(+). Functionally, GTP hydrolase that promotes the GTP-dependent binding of aminoacyl-tRNA to the A-site of ribosomes during protein biosynthesis. This is Elongation factor Tu from Clostridium perfringens (strain ATCC 13124 / DSM 756 / JCM 1290 / NCIMB 6125 / NCTC 8237 / Type A).